The sequence spans 301 residues: Probable alpha-L-glutamate ligase 1 (301 aa).

The ATP-grasp domain maps to 104-287; that stretch reads LQLLSRKGIG…VTEPIVEYIE (184 aa). Residues K141, 178-179, D187, and 211-213 each bind ATP; these read EY and RSN. Residues D248, E260, and N262 each coordinate Mg(2+). The Mn(2+) site is built by D248, E260, and N262.

Belongs to the RimK family. The cofactor is Mg(2+). Mn(2+) serves as cofactor.

The protein is Probable alpha-L-glutamate ligase 1 of Shewanella sp. (strain W3-18-1).